The chain runs to 85 residues: UPF0291 protein SAK_0343 (85 aa).

Positions Gly-58 to Ser-85 are disordered. The segment covering Thr-62–Ser-85 has biased composition (basic and acidic residues).

It belongs to the UPF0291 family.

It is found in the cytoplasm. In Streptococcus agalactiae serotype Ia (strain ATCC 27591 / A909 / CDC SS700), this protein is UPF0291 protein SAK_0343.